Reading from the N-terminus, the 24-residue chain is Osteocalcin (24 aa).

The 24-residue stretch at 1 to 24 (REVCELNPDCDELADHIGFQEAYR) folds into the Gla domain. Residues Glu2, Glu5, and Asp11 each contribute to the Ca(2+) site. 2 positions are modified to 4-carboxyglutamate: Glu2 and Glu5. Residues Cys4 and Cys10 are joined by a disulfide bond.

The protein belongs to the osteocalcin/matrix Gla protein family. Post-translationally, gamma-carboxyglutamate residues are formed by vitamin K dependent carboxylation by GGCX. These residues are essential for the binding of calcium. Decarboxylation promotes the hormone activity.

The protein localises to the secreted. The carboxylated form is one of the main organic components of the bone matrix, which constitutes 1-2% of the total bone protein: it acts as a negative regulator of bone formation and is required to limit bone formation without impairing bone resorption or mineralization. The carboxylated form binds strongly to apatite and calcium. In terms of biological role, the uncarboxylated form acts as a hormone secreted by osteoblasts, which regulates different cellular processes, such as energy metabolism, male fertility and brain development. Regulates of energy metabolism by acting as a hormone favoring pancreatic beta-cell proliferation, insulin secretion and sensitivity and energy expenditure. Uncarboxylated osteocalcin hormone also promotes testosterone production in the testes: acts as a ligand for G protein-coupled receptor GPRC6A at the surface of Leydig cells, initiating a signaling response that promotes the expression of enzymes required for testosterone synthesis in a CREB-dependent manner. Also acts as a regulator of brain development: osteocalcin hormone crosses the blood-brain barrier and acts as a ligand for GPR158 on neurons, initiating a signaling response that prevents neuronal apoptosis in the hippocampus, favors the synthesis of all monoamine neurotransmitters and inhibits that of gamma-aminobutyric acid (GABA). Osteocalcin also crosses the placenta during pregnancy and maternal osteocalcin is required for fetal brain development. The polypeptide is Osteocalcin (Homo sapiens neanderthalensis (Neanderthal)).